The following is a 32-amino-acid chain: Conotoxin Cltx-4 (32 aa).

P2, P24, P28, and P30 each carry 4-hydroxyproline. The residue at position 32 (S32) is a Serine amide.

Contains 4 disulfide bonds. As to expression, expressed by the venom duct.

It localises to the secreted. The chain is Conotoxin Cltx-4 from Californiconus californicus (California cone).